The primary structure comprises 129 residues: Phosphomevalonate dehydratase small subunit (129 aa).

The active-site Proton acceptor is S61.

Belongs to the AcnX type II small subunit family. In terms of assembly, heterodimer composed of a large subunit (PMDh-L) and a small subunit (PMDh-S).

It carries out the reaction (R)-5-phosphomevalonate = (2E)-3-methyl-5-phosphooxypent-2-enoate + H2O. The protein operates within isoprenoid biosynthesis; isopentenyl diphosphate biosynthesis via mevalonate pathway. Functionally, component of a hydro-lyase that catalyzes the dehydration of mevalonate 5-phosphate (MVA5P) to form trans-anhydromevalonate 5-phosphate (tAHMP). Involved in the archaeal mevalonate (MVA) pathway, which provides fundamental precursors for isoprenoid biosynthesis, such as isopentenyl diphosphate (IPP) and dimethylallyl diphosphate (DMAPP). The protein is Phosphomevalonate dehydratase small subunit of Methanocaldococcus jannaschii (strain ATCC 43067 / DSM 2661 / JAL-1 / JCM 10045 / NBRC 100440) (Methanococcus jannaschii).